The chain runs to 263 residues: S-adenosylmethionine decarboxylase proenzyme (263 aa).

The active-site Schiff-base intermediate with substrate; via pyruvic acid is S113. Position 113 is a pyruvic acid (Ser); by autocatalysis (S113). Catalysis depends on H118, which acts as the Proton acceptor; for processing activity. Catalysis depends on C141, which acts as the Proton donor; for catalytic activity.

It belongs to the prokaryotic AdoMetDC family. Type 2 subfamily. Heterooctamer of four alpha and four beta chains arranged as a tetramer of alpha/beta heterodimers. Requires pyruvate as cofactor. In terms of processing, is synthesized initially as an inactive proenzyme. Formation of the active enzyme involves a self-maturation process in which the active site pyruvoyl group is generated from an internal serine residue via an autocatalytic post-translational modification. Two non-identical subunits are generated from the proenzyme in this reaction, and the pyruvate is formed at the N-terminus of the alpha chain, which is derived from the carboxyl end of the proenzyme. The post-translation cleavage follows an unusual pathway, termed non-hydrolytic serinolysis, in which the side chain hydroxyl group of the serine supplies its oxygen atom to form the C-terminus of the beta chain, while the remainder of the serine residue undergoes an oxidative deamination to produce ammonia and the pyruvoyl group blocking the N-terminus of the alpha chain.

It carries out the reaction S-adenosyl-L-methionine + H(+) = S-adenosyl 3-(methylsulfanyl)propylamine + CO2. It functions in the pathway amine and polyamine biosynthesis; S-adenosylmethioninamine biosynthesis; S-adenosylmethioninamine from S-adenosyl-L-methionine: step 1/1. Functionally, catalyzes the decarboxylation of S-adenosylmethionine to S-adenosylmethioninamine (dcAdoMet), the propylamine donor required for the synthesis of the polyamines spermine and spermidine from the diamine putrescine. The chain is S-adenosylmethionine decarboxylase proenzyme from Marinobacter nauticus (strain ATCC 700491 / DSM 11845 / VT8) (Marinobacter aquaeolei).